A 264-amino-acid polypeptide reads, in one-letter code: 3-methyl-2-oxobutanoate hydroxymethyltransferase (264 aa).

Mg(2+) is bound by residues aspartate 46 and aspartate 85. 3-methyl-2-oxobutanoate is bound by residues 46 to 47 (DS), aspartate 85, and lysine 113. Residue glutamate 115 coordinates Mg(2+). The Proton acceptor role is filled by glutamate 181.

The protein belongs to the PanB family. In terms of assembly, homodecamer; pentamer of dimers. Mg(2+) is required as a cofactor.

Its subcellular location is the cytoplasm. It catalyses the reaction 3-methyl-2-oxobutanoate + (6R)-5,10-methylene-5,6,7,8-tetrahydrofolate + H2O = 2-dehydropantoate + (6S)-5,6,7,8-tetrahydrofolate. It functions in the pathway cofactor biosynthesis; (R)-pantothenate biosynthesis; (R)-pantoate from 3-methyl-2-oxobutanoate: step 1/2. In terms of biological role, catalyzes the reversible reaction in which hydroxymethyl group from 5,10-methylenetetrahydrofolate is transferred onto alpha-ketoisovalerate to form ketopantoate. The chain is 3-methyl-2-oxobutanoate hydroxymethyltransferase from Salmonella typhi.